A 457-amino-acid chain; its full sequence is MEPRPLLLLLGLCSAGLVLGSEHETRLVAKLFEDYNSVVRPVEDHRQAVEVTVGLQLIQLINVDEVNQIVTTNVRLKQQWVDYNLKWNPDDYGGVKKIHIPSEKIWRPDLVLYNNADGDFAIVKFTKVLLDYTGHITWTPPAIFKSYCEIIVTHFPFDEQNCSMKLGTWTYDGSVVVINPESDQPDLSNFMESGEWVIKESRGWKHWVFYACCPSTPYLDITYHFVMQRLPLYFIVNVIIPCLLFSFLTGLVFYLPTDSGEKMTLSISVLLSLTVFLLVIVELIPSTSSAVPLIGKYMLFTMVFVIASIIITVIVINTHHRSPSTHVMPEWVRKVFIDTIPNIMFFSTMKRPSREKQDKKIFTEDIDISDISGKPGPPPMGFHSPLIKHPEVKSAIEGIKYIAETMKSDQESNNAAEEWKYVAMVMDHILLAVFMLVCIIGTLAVFAGRLIELNQQG.

The N-terminal stretch at 1 to 20 (MEPRPLLLLLGLCSAGLVLG) is a signal peptide. At 21–230 (SEHETRLVAK…ITYHFVMQRL (210 aa)) the chain is on the extracellular side. 2 disulfides stabilise this stretch: Cys148-Cys162 and Cys212-Cys213. N-linked (GlcNAc...) asparagine glycosylation is present at Asn161. The next 3 membrane-spanning stretches (helical) occupy residues 231-255 (PLYFIVNVIIPCLLFSFLTGLVFYL), 263-281 (MTLSISVLLSLTVFLLVIV), and 297-316 (YMLFTMVFVIASIIITVIVI). Residues 317-428 (NTHHRSPSTH…WKYVAMVMDH (112 aa)) are Cytoplasmic-facing. A helical transmembrane segment spans residues 429-447 (ILLAVFMLVCIIGTLAVFA).

The protein belongs to the ligand-gated ion channel (TC 1.A.9) family. Acetylcholine receptor (TC 1.A.9.1) subfamily. Alpha-1/CHRNA1 sub-subfamily. One of the alpha chains that assemble within the acetylcholine receptor, a pentamer of two alpha chains, a beta, a delta, and a gamma (in immature muscle) or epsilon (in mature muscle) chains. The muscle heteropentamer composed of alpha-1, beta-1, delta, epsilon subunits interacts with the alpha-conotoxin ImII.

It localises to the postsynaptic cell membrane. It is found in the cell membrane. The catalysed reaction is K(+)(in) = K(+)(out). It carries out the reaction Na(+)(in) = Na(+)(out). Upon acetylcholine binding, the AChR responds by an extensive change in conformation that affects all subunits and leads to opening of an ion-conducting channel across the plasma membrane. This Bos taurus (Bovine) protein is Acetylcholine receptor subunit alpha (CHRNA1).